A 304-amino-acid chain; its full sequence is MHLKGKSPMNYIGRFAPSPSGPLHFGSLIAALGSYFQAKAQQGTWLVRIEDLDPPREMPGAAAHILRTLEAYRLHWDGTVVYQSQRHALYQDQIDAWLSTGQAYYCQCTRKAIKAMGGFYNGHCKIHPPARQQDCSIRLRMDNQVQQFIDLKHGTITIPKALAEEDFIIKRRDGLFAYNLAVVLDDIDQGVTQVVRGADLIEPTGRQISLYHTLKQKPVSYLHLPLAMDGNGNKLSKQNHAPAIDPTAPRQTISHAMQFLGFTLPTDFSDASAEQMLAWGCQHWQVSQLPEAIEITPRFSNGPA.

L-glutamate is bound by residues 14 to 18 and glutamate 50; that span reads RFAPS. A 'HIGH' region motif is present at residues 17–27; sequence PSPSGPLHFGS. Positions 106, 108, 120, and 124 each coordinate Zn(2+). L-glutamate is bound by residues tyrosine 178 and arginine 196. The 'KMSKS' region motif lies at 234 to 238; the sequence is KLSKQ. Residue lysine 237 participates in ATP binding.

It belongs to the class-I aminoacyl-tRNA synthetase family. GluQ subfamily. Zn(2+) serves as cofactor.

Functionally, catalyzes the tRNA-independent activation of glutamate in presence of ATP and the subsequent transfer of glutamate onto a tRNA(Asp). Glutamate is transferred on the 2-amino-5-(4,5-dihydroxy-2-cyclopenten-1-yl) moiety of the queuosine in the wobble position of the QUC anticodon. The polypeptide is Glutamyl-Q tRNA(Asp) synthetase (Vibrio cholerae serotype O1 (strain ATCC 39315 / El Tor Inaba N16961)).